The sequence spans 181 residues: Inner membrane-spanning protein YciB (181 aa).

5 helical membrane passes run Leu10–Ile30, Met50–Asp70, Ala72–Ser92, Val118–Phe138, and Phe148–Leu168.

It belongs to the YciB family.

The protein resides in the cell inner membrane. In terms of biological role, plays a role in cell envelope biogenesis, maintenance of cell envelope integrity and membrane homeostasis. In Shewanella oneidensis (strain ATCC 700550 / JCM 31522 / CIP 106686 / LMG 19005 / NCIMB 14063 / MR-1), this protein is Inner membrane-spanning protein YciB.